The chain runs to 230 residues: Ribosomal RNA small subunit methyltransferase G (230 aa).

S-adenosyl-L-methionine-binding positions include G95, F100, 146 to 147 (GE), and R159.

It belongs to the methyltransferase superfamily. RNA methyltransferase RsmG family.

Its subcellular location is the cytoplasm. Specifically methylates the N7 position of a guanine in 16S rRNA. The protein is Ribosomal RNA small subunit methyltransferase G of Parabacteroides distasonis (strain ATCC 8503 / DSM 20701 / CIP 104284 / JCM 5825 / NCTC 11152).